The primary structure comprises 289 residues: Putative 2-aminoethylphosphonate transport system permease protein PhnU (289 aa).

Helical transmembrane passes span 19-39, 76-96, 111-131, 150-170, 202-222, and 254-274; these read WLLLPLLVLATLFFWPLSLIV, FFATAGCLLLGSVMSLILVFI, FIALPTFLITLAFTFIYGSAG, FLYSMQGVILAEITVFTPLVM, VIFPAALPALMAGGSLCLLLT, and YTVACMIALINIVLSLGLFSL. Residues 68–275 enclose the ABC transmembrane type-1 domain; that stretch reads LLNTLQIAFF…VLSLGLFSLY (208 aa).

The protein belongs to the binding-protein-dependent transport system permease family.

The protein localises to the cell inner membrane. In terms of biological role, probably part of the PhnSTUV complex (TC 3.A.1.11.5) involved in 2-aminoethylphosphonate import. Probably responsible for the translocation of the substrate across the membrane. This Salmonella paratyphi A (strain ATCC 9150 / SARB42) protein is Putative 2-aminoethylphosphonate transport system permease protein PhnU (phnU).